The sequence spans 139 residues: Putative nickel-responsive regulator (139 aa).

Residues histidine 79, histidine 90, histidine 92, and cysteine 98 each contribute to the Ni(2+) site.

Belongs to the transcriptional regulatory CopG/NikR family. Requires Ni(2+) as cofactor.

Transcriptional regulator. The sequence is that of Putative nickel-responsive regulator from Nitratidesulfovibrio vulgaris (strain DSM 19637 / Miyazaki F) (Desulfovibrio vulgaris).